The sequence spans 682 residues: DNA-directed RNA polymerase subunit beta' (682 aa).

Zn(2+)-binding residues include Cys-69, Cys-71, Cys-87, and Cys-90. Mg(2+) is bound by residues Asp-489, Asp-491, and Asp-493.

The protein belongs to the RNA polymerase beta' chain family. RpoC1 subfamily. As to quaternary structure, in plastids the minimal PEP RNA polymerase catalytic core is composed of four subunits: alpha, beta, beta', and beta''. When a (nuclear-encoded) sigma factor is associated with the core the holoenzyme is formed, which can initiate transcription. Requires Mg(2+) as cofactor. Zn(2+) is required as a cofactor.

The protein localises to the plastid. The protein resides in the chloroplast. The enzyme catalyses RNA(n) + a ribonucleoside 5'-triphosphate = RNA(n+1) + diphosphate. DNA-dependent RNA polymerase catalyzes the transcription of DNA into RNA using the four ribonucleoside triphosphates as substrates. The chain is DNA-directed RNA polymerase subunit beta' from Brachypodium distachyon (Purple false brome).